We begin with the raw amino-acid sequence, 555 residues long: Potassium-transporting ATPase potassium-binding subunit (555 aa).

Helical transmembrane passes span 2-22 (IWVA…PTGI), 60-80 (QYAL…YFIF), 130-150 (IGIT…VMAF), 173-193 (VFLP…VPQT), 246-266 (MSNI…PFTY), 278-298 (ILFV…TTSE), 374-394 (AGFV…GLMV), 412-432 (LIAV…ALAL), 483-503 (LVMF…AASL), and 525-545 (GIFI…MLVL).

This sequence belongs to the KdpA family. The system is composed of three essential subunits: KdpA, KdpB and KdpC.

The protein localises to the cell membrane. Its function is as follows. Part of the high-affinity ATP-driven potassium transport (or Kdp) system, which catalyzes the hydrolysis of ATP coupled with the electrogenic transport of potassium into the cytoplasm. This subunit binds the extracellular potassium ions and delivers the ions to the membrane domain of KdpB through an intramembrane tunnel. The polypeptide is Potassium-transporting ATPase potassium-binding subunit (Bacillus anthracis (strain A0248)).